A 323-amino-acid polypeptide reads, in one-letter code: DNA-directed RNA polymerase subunit alpha 1 (323 aa).

The interval M1–R228 is alpha N-terminal domain (alpha-NTD). The segment at I244–K323 is alpha C-terminal domain (alpha-CTD).

The protein belongs to the RNA polymerase alpha chain family. In terms of assembly, homodimer. The RNAP catalytic core consists of 2 alpha, 1 beta, 1 beta' and 1 omega subunit. When a sigma factor is associated with the core the holoenzyme is formed, which can initiate transcription.

The enzyme catalyses RNA(n) + a ribonucleoside 5'-triphosphate = RNA(n+1) + diphosphate. Its function is as follows. DNA-dependent RNA polymerase catalyzes the transcription of DNA into RNA using the four ribonucleoside triphosphates as substrates. The sequence is that of DNA-directed RNA polymerase subunit alpha 1 from Francisella tularensis subsp. tularensis (strain FSC 198).